The sequence spans 818 residues: MERYKALEQLLTELDDFLKILDQENLSSTALVKKSCLAELLRLYTKSSSSDEEYIYMNKVTINKQQNAESQGKAPEEQGLLPNGEPSQHSSAPQKSLPDLPPPKMIPERKQLAIPKTESPEGYYEEAEPYDTSLNEDGEAVSSSYESYDEEDGSKGKSAPYQWPSPEAGIELMRDARICAFLWRKKWLGQWAKQLCVIKDNRLLCYKSSKDHSPQLDVNLLGSSVIHKEKQVRKKEHKLKITPMNADVIVLGLQSKDQAEQWLRVIQEVSGLPSEGASEGNQYTPDAQRFNCQKPDIAEKYLSASEYGSSVDGHPEVPETKDVKKKCSAGLKLSNLMNLGRKKSTSLEPVERSLETSSYLNVLVNSQWKSRWCSVRDNHLHFYQDRNRSKVAQQPLSLVGCEVVPDPSPDHLYSFRILHKGEELAKLEAKSSEEMGHWLGLLLSESGSKTDPEEFTYDYVDADRVSCIVSAAKNSLLLMQRKFSEPNTYIDGLPSQDRQEELYDDVDLSELTAAVEPTEEATPVADDPNERESDRVYLDLTPVKSFLHGPSSAQAQASSPTLSCLDNATEALPADSGPGPTPDEPCIKCPENLGEQQLESLEPEDPSLRITTVKIQTEQQRISFPPSCPDAVVATPPGASPPVKDRLRVTSAEIKLGKNRTEAEVKRYTEEKERLEKKKEEIRGHLAQLRKEKRELKETLLKCTDKEVLASLEQKLKEIDEECRGEESRRVDLELSIMEVKDNLKKAEAGPVTLGTTVDTTHLENVSPRPKAVTPASAPDCTPVNSATTLKNRPLSVVVTGKGTVLQKAKEWEKKGAS.

Tyr-56 is subject to Phosphotyrosine. Residues 66-163 (QNAESQGKAP…SKGKSAPYQW (98 aa)) form a disordered region. A compositionally biased stretch (polar residues) spans 85-94 (EPSQHSSAPQ). Over residues 123 to 139 (YYEEAEPYDTSLNEDGE) the composition is skewed to acidic residues. PH domains lie at 175 to 271 (DARI…EVSG) and 353 to 447 (SLET…SESG). Residue Ser-408 is modified to Phosphoserine. Tyr-413 carries the post-translational modification Phosphotyrosine. Ser-484 bears the Phosphoserine mark. The segment at 513–532 (AAVEPTEEATPVADDPNERE) is disordered. The stretch at 652 to 749 (AEIKLGKNRT…VKDNLKKAEA (98 aa)) forms a coiled coil. Residues 765 to 787 (NVSPRPKAVTPASAPDCTPVNSA) are disordered.

As to quaternary structure, interacts with SRC. Interacts with LCK when tyrosine phosphorylated. In terms of processing, tyrosine phosphorylated (by SRC). In terms of tissue distribution, detected in spleen and thyroid, and at lower levels in kidney, brain, lung and pancreas.

It localises to the cytoplasm. Its function is as follows. May play a role in a signaling cascade by enhancing the kinase activity of SRC. Contributes to SRC-regulated transcription activation. The chain is Actin filament-associated protein 1-like 2 (AFAP1L2) from Homo sapiens (Human).